A 422-amino-acid chain; its full sequence is Adenylosuccinate synthetase (422 aa).

Residues 11-17 (GDEGKGK) and 39-41 (GHT) each bind GTP. D12 (proton acceptor) is an active-site residue. Mg(2+) is bound by residues D12 and G39. IMP is bound by residues 12–15 (DEGK), 37–40 (NAGH), T129, R143, N219, T234, and R298. H40 serves as the catalytic Proton donor. 294-300 (VTTGRKR) contributes to the substrate binding site. GTP is bound by residues R300, 326 to 328 (KLD), and 411 to 413 (GTG).

The protein belongs to the adenylosuccinate synthetase family. As to quaternary structure, homodimer. The cofactor is Mg(2+).

The protein localises to the cytoplasm. It catalyses the reaction IMP + L-aspartate + GTP = N(6)-(1,2-dicarboxyethyl)-AMP + GDP + phosphate + 2 H(+). Its pathway is purine metabolism; AMP biosynthesis via de novo pathway; AMP from IMP: step 1/2. Its function is as follows. Plays an important role in the de novo pathway and in the salvage pathway of purine nucleotide biosynthesis. Catalyzes the first committed step in the biosynthesis of AMP from IMP. The protein is Adenylosuccinate synthetase of Talaromyces marneffei (strain ATCC 18224 / CBS 334.59 / QM 7333) (Penicillium marneffei).